Here is a 311-residue protein sequence, read N- to C-terminus: Methionyl-tRNA formyltransferase (311 aa).

(6S)-5,6,7,8-tetrahydrofolate is bound at residue 109-112 (SLLP).

Belongs to the Fmt family.

The catalysed reaction is L-methionyl-tRNA(fMet) + (6R)-10-formyltetrahydrofolate = N-formyl-L-methionyl-tRNA(fMet) + (6S)-5,6,7,8-tetrahydrofolate + H(+). In terms of biological role, attaches a formyl group to the free amino group of methionyl-tRNA(fMet). The formyl group appears to play a dual role in the initiator identity of N-formylmethionyl-tRNA by promoting its recognition by IF2 and preventing the misappropriation of this tRNA by the elongation apparatus. The polypeptide is Methionyl-tRNA formyltransferase (Solibacter usitatus (strain Ellin6076)).